The following is a 135-amino-acid chain: Aspartate 1-decarboxylase (135 aa).

Catalysis depends on Ser-25, which acts as the Schiff-base intermediate with substrate; via pyruvic acid. Ser-25 carries the post-translational modification Pyruvic acid (Ser). Thr-57 contributes to the substrate binding site. Tyr-58 (proton donor) is an active-site residue. 73 to 75 provides a ligand contact to substrate; sequence GSA.

Belongs to the PanD family. Heterooctamer of four alpha and four beta subunits. Requires pyruvate as cofactor. In terms of processing, is synthesized initially as an inactive proenzyme, which is activated by self-cleavage at a specific serine bond to produce a beta-subunit with a hydroxyl group at its C-terminus and an alpha-subunit with a pyruvoyl group at its N-terminus.

It localises to the cytoplasm. The catalysed reaction is L-aspartate + H(+) = beta-alanine + CO2. Its pathway is cofactor biosynthesis; (R)-pantothenate biosynthesis; beta-alanine from L-aspartate: step 1/1. Its function is as follows. Catalyzes the pyruvoyl-dependent decarboxylation of aspartate to produce beta-alanine. This chain is Aspartate 1-decarboxylase, found in Albidiferax ferrireducens (strain ATCC BAA-621 / DSM 15236 / T118) (Rhodoferax ferrireducens).